The primary structure comprises 173 residues: Protein PLASTID REDOX INSENSITIVE 2, chloroplastic (173 aa).

Residues 1–55 constitute a chloroplast transit peptide; the sequence is MATRAWVAAAVALNPQLLPLRSCSPTKSVSPAQRSASMGLRLRSGRPCLGKFVCR.

It localises to the plastid. The protein localises to the chloroplast stroma. Its subcellular location is the chloroplast nucleoid. Required for the activity of the plastid-encoded RNA polymerase (PEP) and full expression of genes transcribed by PEP. This chain is Protein PLASTID REDOX INSENSITIVE 2, chloroplastic, found in Zea mays (Maize).